Reading from the N-terminus, the 188-residue chain is MIFKDYDFLQNYDLKNFEEKVKIYKELLSKFNRIHNLTHLKNIDENIFDSIKILDFYDFSKAKNIADIGSGAGFPVVFLAFLLQSNFHLFEPNPKKAAFLRTLKIECELPNLHIYKEKVQEYKNTFKADIITSRALMDVKPLLEICKNLKDENTVFILWKGSEIYQELENIKDYEIFENNLRRYCILK.

S-adenosyl-L-methionine is bound by residues Gly-69, Phe-74, 119–120 (VQ), and Arg-134.

This sequence belongs to the methyltransferase superfamily. RNA methyltransferase RsmG family.

The protein localises to the cytoplasm. The enzyme catalyses guanosine(527) in 16S rRNA + S-adenosyl-L-methionine = N(7)-methylguanosine(527) in 16S rRNA + S-adenosyl-L-homocysteine. In terms of biological role, specifically methylates the N7 position of guanine in position 527 of 16S rRNA. This chain is Ribosomal RNA small subunit methyltransferase G, found in Campylobacter jejuni subsp. jejuni serotype O:2 (strain ATCC 700819 / NCTC 11168).